Reading from the N-terminus, the 94-residue chain is Large ribosomal subunit protein bL25 (94 aa).

This sequence belongs to the bacterial ribosomal protein bL25 family. Part of the 50S ribosomal subunit; part of the 5S rRNA/L5/L18/L25 subcomplex. Contacts the 5S rRNA. Binds to the 5S rRNA independently of L5 and L18.

Functionally, this is one of the proteins that binds to the 5S RNA in the ribosome where it forms part of the central protuberance. This chain is Large ribosomal subunit protein bL25, found in Klebsiella pneumoniae subsp. pneumoniae (strain ATCC 700721 / MGH 78578).